The primary structure comprises 470 residues: Alpha-galactosidase (470 aa).

Positions 1-18 (MFSLLLLTSTALVETALG) are cleaved as a signal peptide. Residues C42 and C74 are joined by a disulfide bond. N-linked (GlcNAc...) asparagine glycosylation is present at N43. D72 and D73 together coordinate substrate. An N-linked (GlcNAc...) asparagine glycan is attached at N82. A disulfide bridge links C121 with C151. Residue K147 coordinates substrate. The Nucleophile role is filled by D149. N175 carries N-linked (GlcNAc...) asparagine glycosylation. A substrate-binding site is contributed by R205. D209 acts as the Proton donor in catalysis. Cystine bridges form between C221/C237 and C223/C230. Residue Q251 coordinates substrate. Residues N270, N388, N413, N422, N435, and N454 are each glycosylated (N-linked (GlcNAc...) asparagine).

This sequence belongs to the glycosyl hydrolase 27 family. Homotetramer.

The protein localises to the secreted. It carries out the reaction Hydrolysis of terminal, non-reducing alpha-D-galactose residues in alpha-D-galactosides, including galactose oligosaccharides, galactomannans and galactolipids.. The protein is Alpha-galactosidase (MEL) of Zygotorulaspora mrakii (Zygosaccharomyces mrakii).